We begin with the raw amino-acid sequence, 401 residues long: Homeobox protein engrailed-1 (401 aa).

Disordered stretches follow at residues 1 to 102 (MEEQ…PAAQ), 138 to 167 (GGGA…HSLG), 229 to 253 (SKPS…AKFP), and 293 to 315 (RPSS…DKRP). Low complexity predominate over residues 13–48 (DSGLGAVAAAAPSGLSLSLSPGASGSSGSDGDSVPV). 2 stretches are compositionally biased toward pro residues: residues 49–64 (SPQP…PCLP) and 73–88 (PPHP…PPPQ). Positions 89-102 (HLAAPAHQPQPAAQ) are enriched in low complexity. Composition is skewed to gly residues over residues 138-147 (GGGAAAGGGS) and 234-243 (SGGGSGGNAG). The segment at residues 312 to 371 (DKRPRTAFTAEQLQRLKAEFQANRYITEQRRQTLAQELSLNESQIKIWFQNKRAKIKKAT) is a DNA-binding region (homeobox).

This sequence belongs to the engrailed homeobox family.

The protein resides in the nucleus. In terms of biological role, required for proper formation of the apical ectodermal ridge and correct dorsal-ventral patterning in the limb. This chain is Homeobox protein engrailed-1 (En1), found in Mus musculus (Mouse).